A 221-amino-acid polypeptide reads, in one-letter code: Ras-related protein Rab-27A (221 aa).

Ser2 is modified (N-acetylserine). Position 2 is a phosphoserine (Ser2). 16-24 (GDSGVGKTS) is a GTP binding site. The short motif at 38 to 46 (FITTVGIDF) is the Effector region element. GTP is bound by residues 74–78 (DTAGQ), 133–136 (NKSD), and 163–165 (SAA). A disulfide bridge links Cys123 with Cys188. S-geranylgeranyl cysteine attachment occurs at residues Cys219 and Cys221. Cys221 is modified (cysteine methyl ester).

Belongs to the small GTPase superfamily. Rab family. Binds SYTL1, SYTL2, SLAC2B, MYRIP, SYTL3, SYTL4, SYTL5 and MLPH. Interacts with UNC13D. Interacts with RPH3A and RPH3A. Does not interact with the BLOC-3 complex (heterodimer of HPS1 and HPS4). Interacts (GDP-bound form preferentially) with DENND10. As to expression, detected in melanocytes. Expressed abundantly in the stomach and is predominantly localized at the apical region of gastric-surface mucus cells. Also expressed in the thymus and lung.

The protein localises to the membrane. It is found in the melanosome. The protein resides in the late endosome. Its subcellular location is the lysosome. The catalysed reaction is GTP + H2O = GDP + phosphate + H(+). Regulated by guanine nucleotide exchange factors (GEFs) which promote the exchange of bound GDP for free GTP, GTPase activating proteins (GAPs) which increase the GTP hydrolysis activity, and GDP dissociation inhibitors which inhibit the dissociation of the nucleotide from the GTPase. Activated by GEFs such as DENND10. In terms of biological role, small GTPase which cycles between active GTP-bound and inactive GDP-bound states. In its active state, binds to a variety of effector proteins to regulate homeostasis of late endocytic pathway, including endosomal positioning, maturation and secretion. Plays a role in cytotoxic granule exocytosis in lymphocytes. Required for both granule maturation and granule docking and priming at the immunologic synapse. The protein is Ras-related protein Rab-27A (Rab27a) of Mus musculus (Mouse).